A 129-amino-acid chain; its full sequence is Lysozyme C (129 aa).

The 129-residue stretch at 1–129 (KVYGRCELAA…VNAWIRGCRL (129 aa)) folds into the C-type lysozyme domain. Intrachain disulfides connect C6/C127, C30/C115, C64/C80, and C76/C94. Active-site residues include E35 and D52.

Belongs to the glycosyl hydrolase 22 family. As to quaternary structure, monomer.

The protein resides in the secreted. It catalyses the reaction Hydrolysis of (1-&gt;4)-beta-linkages between N-acetylmuramic acid and N-acetyl-D-glucosamine residues in a peptidoglycan and between N-acetyl-D-glucosamine residues in chitodextrins.. In terms of biological role, lysozymes have primarily a bacteriolytic function; those in tissues and body fluids are associated with the monocyte-macrophage system and enhance the activity of immunoagents. The chain is Lysozyme C (LYZ) from Syrmaticus reevesii (Reeves's pheasant).